A 119-amino-acid polypeptide reads, in one-letter code: Large ribosomal subunit protein bL20 (119 aa).

It belongs to the bacterial ribosomal protein bL20 family.

In terms of biological role, binds directly to 23S ribosomal RNA and is necessary for the in vitro assembly process of the 50S ribosomal subunit. It is not involved in the protein synthesizing functions of that subunit. The chain is Large ribosomal subunit protein bL20 from Streptococcus gordonii (strain Challis / ATCC 35105 / BCRC 15272 / CH1 / DL1 / V288).